A 179-amino-acid chain; its full sequence is Large ribosomal subunit protein uL5 (179 aa).

It belongs to the universal ribosomal protein uL5 family. Part of the 50S ribosomal subunit; part of the 5S rRNA/L5/L18/L25 subcomplex. Contacts the 5S rRNA and the P site tRNA. Forms a bridge to the 30S subunit in the 70S ribosome.

Its function is as follows. This is one of the proteins that bind and probably mediate the attachment of the 5S RNA into the large ribosomal subunit, where it forms part of the central protuberance. In the 70S ribosome it contacts protein S13 of the 30S subunit (bridge B1b), connecting the 2 subunits; this bridge is implicated in subunit movement. Contacts the P site tRNA; the 5S rRNA and some of its associated proteins might help stabilize positioning of ribosome-bound tRNAs. The polypeptide is Large ribosomal subunit protein uL5 (Oceanobacillus iheyensis (strain DSM 14371 / CIP 107618 / JCM 11309 / KCTC 3954 / HTE831)).